The primary structure comprises 504 residues: DnaJ homolog subfamily C member 3 (504 aa).

The first 31 residues, 1–31 (MVAPGSVTSRLGSVFPFLLVLVDLQYEGAEC), serve as a signal peptide directing secretion. 9 TPR repeats span residues 37-70 (VEKH…DPDN), 72-104 (IAYY…KMDF), 105-138 (TAAR…NPSE), 154-187 (MQRL…CVWD), 189-221 (ELRE…KNDN), 222-255 (TEAF…DQDH), 268-301 (LNKL…EPSI), 306-339 (VRSK…EPDN), and 340-373 (VNAL…NEND). Cys-248 and Cys-258 are oxidised to a cystine. Ser-274 bears the Phosphoserine; by FAM20C mark. Cys-313 and Cys-329 are disulfide-bonded. The tract at residues 375–393 (QIREGLEKAQRLLKQSQKR) is flexible linker. The J domain occupies 394–462 (DYYKILGVKR…EMRKKFDDGE (69 aa)). The disordered stretch occupies residues 451 to 481 (DPEMRKKFDDGEDPLDAESQQGGGGNPFHRS).

In terms of assembly, interacts with EIF2AK4/GCN2; this interaction occurs under endoplasmic reticulum (ER) stress, hypothermic and amino acid starving stress conditions and inhibits EIF2AK4/GCN2 kinase activity. Interacts with EIF2AK3. Interacts with EIF2AK2. Forms a trimeric complex with DNAJB1 and HSPA8. Interacts with THAP12. Widely expressed with high level in the pancreas and testis. Also expressed in cell lines with different levels.

The protein resides in the endoplasmic reticulum. Its function is as follows. Involved in the unfolded protein response (UPR) during endoplasmic reticulum (ER) stress. Acts as a negative regulator of the EIF2AK4/GCN2 kinase activity by preventing the phosphorylation of eIF-2-alpha at 'Ser-52' and hence attenuating general protein synthesis under ER stress, hypothermic and amino acid starving stress conditions. Co-chaperone of HSPA8/HSC70, it stimulates its ATPase activity. May inhibit both the autophosphorylation of EIF2AK2/PKR and the ability of EIF2AK2 to catalyze phosphorylation of the EIF2A. May inhibit EIF2AK3/PERK activity. The sequence is that of DnaJ homolog subfamily C member 3 (DNAJC3) from Homo sapiens (Human).